Here is a 274-residue protein sequence, read N- to C-terminus: Protein CURLY FLAG LEAF 1 (274 aa).

The disordered stretch occupies residues 17 to 44 (SLNGGGGGGGGRRRGRRAAAAEGSDDSE). The EAR signature appears at 47-52 (TVELNS). One can recognise a WW domain in the interval 54-88 (VALPYHWEQCLDIRTGQVYYINWEDGTRTTIDPRS). Disordered regions lie at residues 83-133 (TIDP…SGYT) and 175-216 (GRDG…SPTD). Composition is skewed to low complexity over residues 87–106 (RSSS…SSSR), 121–133 (AAAA…SGYT), and 184–207 (SSSS…AVSS).

As to quaternary structure, binds to HDG1.

Negatively regulates the cuticle development probably by interacting with the HD-ZIP IV transcription factor HDG1. In Oryza sativa subsp. japonica (Rice), this protein is Protein CURLY FLAG LEAF 1.